Consider the following 72-residue polypeptide: Translation initiation factor IF-1 (72 aa).

The 72-residue stretch at 1–72 (MSKEDMIEFS…SKGRITFRFK (72 aa)) folds into the S1-like domain.

Belongs to the IF-1 family. In terms of assembly, component of the 30S ribosomal translation pre-initiation complex which assembles on the 30S ribosome in the order IF-2 and IF-3, IF-1 and N-formylmethionyl-tRNA(fMet); mRNA recruitment can occur at any time during PIC assembly.

The protein resides in the cytoplasm. Functionally, one of the essential components for the initiation of protein synthesis. Stabilizes the binding of IF-2 and IF-3 on the 30S subunit to which N-formylmethionyl-tRNA(fMet) subsequently binds. Helps modulate mRNA selection, yielding the 30S pre-initiation complex (PIC). Upon addition of the 50S ribosomal subunit IF-1, IF-2 and IF-3 are released leaving the mature 70S translation initiation complex. The chain is Translation initiation factor IF-1 from Gluconacetobacter diazotrophicus (strain ATCC 49037 / DSM 5601 / CCUG 37298 / CIP 103539 / LMG 7603 / PAl5).